Reading from the N-terminus, the 510-residue chain is Monocarboxylate transporter 14 (510 aa).

Residues 1–27 lie on the Cytoplasmic side of the membrane; that stretch reads MYTSHEDIGYDFEDGPKDKKTLKPHPN. The next 6 helical transmembrane spans lie at 28–48, 74–94, 103–123, 127–147, 159–179, and 191–209; these read IDGG…ILIM, WVSS…GLFI, AIIG…AANV, FITF…PAVV, LAQG…TVLL, and AMLI…GALM. The tract at residues 214–255 is disordered; sequence PGKNPNDPGEKDVRGLPAHSTESVKSTGQQGRTEEKDGGLGN. A compositionally biased stretch (polar residues) spans 233–244; sequence STESVKSTGQQG. The next 6 helical transmembrane spans lie at 315 to 335, 353 to 373, 379 to 399, 408 to 428, 443 to 463, and 474 to 494; these read MFVA…IPFI, FPLT…LGVI, ISVW…IFIL, LAVI…MPVV, GIII…AGWI, and FYIC…QPCI. The Cytoplasmic segment spans residues 495–510; it reads RIIEQSRRKYMDGAHV.

It belongs to the major facilitator superfamily. Monocarboxylate porter (TC 2.A.1.13) family.

Its subcellular location is the cell membrane. In terms of biological role, proton-linked monocarboxylate transporter. May catalyze the transport of monocarboxylates across the plasma membrane. In Homo sapiens (Human), this protein is Monocarboxylate transporter 14 (SLC16A14).